Reading from the N-terminus, the 440-residue chain is Xylose isomerase (440 aa).

Residues Asp-307 and Asp-309 each contribute to the Mg(2+) site.

Belongs to the xylose isomerase family. In terms of assembly, homotetramer. It depends on Mg(2+) as a cofactor.

It localises to the cytoplasm. The enzyme catalyses alpha-D-xylose = alpha-D-xylulofuranose. This chain is Xylose isomerase, found in Pectobacterium carotovorum subsp. carotovorum (strain PC1).